We begin with the raw amino-acid sequence, 250 residues long: Small ribosomal subunit protein uS3 (250 aa).

The 73-residue stretch at 39–111 folds into the KH type-2 domain; sequence IRPLIKNHYP…KVQINIFEVK (73 aa).

This sequence belongs to the universal ribosomal protein uS3 family. Part of the 30S ribosomal subunit. Forms a tight complex with proteins S10 and S14.

Binds the lower part of the 30S subunit head. Binds mRNA in the 70S ribosome, positioning it for translation. The sequence is that of Small ribosomal subunit protein uS3 from Ziziphus jujuba witches'-broom phytoplasma.